The sequence spans 134 residues: Small ribosomal subunit protein uS8c (134 aa).

The protein belongs to the universal ribosomal protein uS8 family. Part of the 30S ribosomal subunit.

It is found in the plastid. The protein resides in the chloroplast. Its function is as follows. One of the primary rRNA binding proteins, it binds directly to 16S rRNA central domain where it helps coordinate assembly of the platform of the 30S subunit. In Capsella bursa-pastoris (Shepherd's purse), this protein is Small ribosomal subunit protein uS8c (rps8).